The primary structure comprises 193 residues: Putative zinc finger protein 726P1 (193 aa).

Residues 18–40 (YKCKKCGKTFNWSSILTNNKKIH) form a C2H2-type 1; degenerate zinc finger. Residues 46-68 (YKCEECGKAFKQHSTLTTHKIIC) form a C2H2-type 2; atypical zinc finger. A C2H2-type 3; degenerate zinc finger spans residues 74-96 (YRCEECGKAFCQPSTLTRYKRMH). The C2H2-type 4 zinc finger occupies 102–124 (YKCEECGKAFTQFSTLTKHKRIH). The segment at 130–152 (YKCEESGKAFIWSSGLTEHRRVH) adopts a C2H2-type 5; degenerate zinc-finger fold. Residues 158-180 (YKCEECGKALIQFSTLTRHKRIH) form a C2H2-type 6 zinc finger.

The polypeptide is Putative zinc finger protein 726P1 (ZNF726P1) (Homo sapiens (Human)).